Reading from the N-terminus, the 50-residue chain is Large ribosomal subunit protein bL33B (50 aa).

It belongs to the bacterial ribosomal protein bL33 family.

In Streptococcus agalactiae serotype V (strain ATCC BAA-611 / 2603 V/R), this protein is Large ribosomal subunit protein bL33B.